Consider the following 208-residue polypeptide: V-type ATP synthase subunit D (208 aa).

Belongs to the V-ATPase D subunit family.

In terms of biological role, produces ATP from ADP in the presence of a proton gradient across the membrane. The polypeptide is V-type ATP synthase subunit D (Streptococcus pyogenes serotype M6 (strain ATCC BAA-946 / MGAS10394)).